The following is a 276-amino-acid chain: Dermonecrotic toxin LlSicTox-alphaIV2ii (276 aa).

Residue histidine 5 is part of the active site. Residues glutamate 25 and aspartate 27 each coordinate Mg(2+). The active-site Nucleophile is the histidine 41. Disulfide bonds link cysteine 45/cysteine 51 and cysteine 47/cysteine 193. Aspartate 85 contributes to the Mg(2+) binding site.

It belongs to the arthropod phospholipase D family. Class II subfamily. Mg(2+) serves as cofactor. Expressed by the venom gland.

It localises to the secreted. It catalyses the reaction an N-(acyl)-sphingosylphosphocholine = an N-(acyl)-sphingosyl-1,3-cyclic phosphate + choline. It carries out the reaction an N-(acyl)-sphingosylphosphoethanolamine = an N-(acyl)-sphingosyl-1,3-cyclic phosphate + ethanolamine. The catalysed reaction is a 1-acyl-sn-glycero-3-phosphocholine = a 1-acyl-sn-glycero-2,3-cyclic phosphate + choline. The enzyme catalyses a 1-acyl-sn-glycero-3-phosphoethanolamine = a 1-acyl-sn-glycero-2,3-cyclic phosphate + ethanolamine. Dermonecrotic toxins cleave the phosphodiester linkage between the phosphate and headgroup of certain phospholipids (sphingolipid and lysolipid substrates), forming an alcohol (often choline) and a cyclic phosphate. This toxin acts on sphingomyelin (SM). It may also act on ceramide phosphoethanolamine (CPE), lysophosphatidylcholine (LPC) and lysophosphatidylethanolamine (LPE), but not on lysophosphatidylserine (LPS), and lysophosphatidylglycerol (LPG). It acts by transphosphatidylation, releasing exclusively cyclic phosphate products as second products. Induces dermonecrosis, hemolysis, increased vascular permeability, edema, inflammatory response, and platelet aggregation. The chain is Dermonecrotic toxin LlSicTox-alphaIV2ii from Loxosceles laeta (South American recluse spider).